We begin with the raw amino-acid sequence, 264 residues long: DNA-binding HTH-type transcriptional repressor TrmBL2 (264 aa).

Residues 81-113 adopt a coiled-coil conformation; it reads LEKFIEEWQERVKEELEAKKKAKEELIELMKPL.

The protein belongs to the transcriptional regulator TrmB family.

Its subcellular location is the cytoplasm. The protein resides in the chromosome. An abundant chromosomal protein that seems to be involved in both genome architecture and transcription repression. Incubation with DNA in vitro gives fibrous structures 14.2 +/- 2.1 nm in thickness (naked DNA is 1.83 +/- 0.37 nm); does not significantly compact DNA. Binds to both coding and non-coding regions; binding within gene promoters correlates with decreased transcript levels, while binding within coding regions does not. The sequence is that of DNA-binding HTH-type transcriptional repressor TrmBL2 from Thermococcus kodakarensis (strain ATCC BAA-918 / JCM 12380 / KOD1) (Pyrococcus kodakaraensis (strain KOD1)).